Consider the following 110-residue polypeptide: Large ribosomal subunit protein uL22 (110 aa).

It belongs to the universal ribosomal protein uL22 family. Part of the 50S ribosomal subunit.

Its function is as follows. This protein binds specifically to 23S rRNA; its binding is stimulated by other ribosomal proteins, e.g. L4, L17, and L20. It is important during the early stages of 50S assembly. It makes multiple contacts with different domains of the 23S rRNA in the assembled 50S subunit and ribosome. In terms of biological role, the globular domain of the protein is located near the polypeptide exit tunnel on the outside of the subunit, while an extended beta-hairpin is found that lines the wall of the exit tunnel in the center of the 70S ribosome. The sequence is that of Large ribosomal subunit protein uL22 from Aliivibrio fischeri (strain MJ11) (Vibrio fischeri).